The sequence spans 76 residues: UPF0154 protein LCA_1273 (76 aa).

The helical transmembrane segment at 3 to 23 threads the bilayer; the sequence is IGIGVLIFVIGALLGAVAGFF. Residues 55-76 form a disordered region; sequence PSEKKLNQMMSSMKAQQKRSKK.

The protein belongs to the UPF0154 family.

The protein resides in the cell membrane. The polypeptide is UPF0154 protein LCA_1273 (Latilactobacillus sakei subsp. sakei (strain 23K) (Lactobacillus sakei subsp. sakei)).